Reading from the N-terminus, the 425-residue chain is Tol-Pal system protein TolB (425 aa).

An N-terminal signal peptide occupies residues 1-25 (MTRKHILSFALMTALGMTVTSTAFA).

It belongs to the TolB family. As to quaternary structure, the Tol-Pal system is composed of five core proteins: the inner membrane proteins TolA, TolQ and TolR, the periplasmic protein TolB and the outer membrane protein Pal. They form a network linking the inner and outer membranes and the peptidoglycan layer.

The protein resides in the periplasm. Functionally, part of the Tol-Pal system, which plays a role in outer membrane invagination during cell division and is important for maintaining outer membrane integrity. This chain is Tol-Pal system protein TolB, found in Acinetobacter baylyi (strain ATCC 33305 / BD413 / ADP1).